A 464-amino-acid polypeptide reads, in one-letter code: tRNA modification GTPase MnmE (464 aa).

3 residues coordinate (6S)-5-formyl-5,6,7,8-tetrahydrofolate: Arg27, Glu90, and Lys129. Positions 222–384 constitute a TrmE-type G domain; it reads GVTLVLAGSV…LYDRIRSFIA (163 aa). GTP-binding positions include 232 to 237, 251 to 257, and 276 to 279; these read NVGKSS, SSYAGTT, and DTAG. Position 236 (Ser236) interacts with Mg(2+). Residue Ser251 coordinates K(+). Mg(2+) is bound at residue Thr257. (6S)-5-formyl-5,6,7,8-tetrahydrofolate is bound at residue Lys464.

The protein belongs to the TRAFAC class TrmE-Era-EngA-EngB-Septin-like GTPase superfamily. TrmE GTPase family. As to quaternary structure, homodimer. Heterotetramer of two MnmE and two MnmG subunits. It depends on K(+) as a cofactor.

The protein localises to the cytoplasm. Its function is as follows. Exhibits a very high intrinsic GTPase hydrolysis rate. Involved in the addition of a carboxymethylaminomethyl (cmnm) group at the wobble position (U34) of certain tRNAs, forming tRNA-cmnm(5)s(2)U34. The polypeptide is tRNA modification GTPase MnmE (Borrelia recurrentis (strain A1)).